The primary structure comprises 274 residues: tRNA pseudouridine synthase A (274 aa).

The active-site Nucleophile is the D57. Y115 is a substrate binding site.

This sequence belongs to the tRNA pseudouridine synthase TruA family. As to quaternary structure, homodimer.

The enzyme catalyses uridine(38/39/40) in tRNA = pseudouridine(38/39/40) in tRNA. Formation of pseudouridine at positions 38, 39 and 40 in the anticodon stem and loop of transfer RNAs. The chain is tRNA pseudouridine synthase A from Frankia casuarinae (strain DSM 45818 / CECT 9043 / HFP020203 / CcI3).